Here is a 581-residue protein sequence, read N- to C-terminus: MDIQRSILIVALAVVSYLMVLQWNEDYGQAALPAEVSSSTAATPALPDTPADTASTGGDDIPTAVAEPTAAAVAPTAAASDELIRVKTDVLDLAIDPRGGDIVQLRLPQYPRRQDRPDVPFQLFDNGSERTYLAQSGLIGQNAPDKSSGRALWSSEKQSYEMADGQDSLVVDLTYSENGVSYIKRYSFKRGLNPQCSAREQQLKKPGCVDPSAYQVDVRYLIDNQSDQAWSGNLFAQLKRDNSGDPSSTTATGTATYLGAALWTSDEPYKKVSMKDIDKQSFKETVQGGWVAWLQHYFVTAWVPSKDSTNLVQTRKDSQGNYIVGFTGPAVQVAAGAQGETGAILYAGPKLQEHLGKLSPGLELTVDYGFLWFLAQPIFWLLEVIHGLLGNWGWSIIVLTIIIKLIFFPLSAASYRSMARMRAVSPKLQALKEQHGDDRQKMSQAMMELYKKEKINPLGGCLPILVQMPVFLALYWVLLESVEMRQAPWMFWITDLSIKDPFFILPIIMGATMFIQQQLNPTPPDPMQARVLKLMPIIFTFFFLWFPAGLVLYWVVNNILSIGQQWYITRKIEAAAKPANA.

The chain crosses the membrane as a helical span at residues 7-27 (ILIVALAVVSYLMVLQWNEDY). Positions 41–62 (AATPALPDTPADTASTGGDDIP) are disordered. Transmembrane regions (helical) follow at residues 365–385 (TVDYGFLWFLAQPIFWLLEVI), 388–408 (LLGNWGWSIIVLTIIIKLIFF), 458–478 (LGGCLPILVQMPVFLALYWVL), 489–509 (WMFWITDLSIKDPFFILPIIM), and 536–556 (PIIFTFFFLWFPAGLVLYWVV).

The protein belongs to the OXA1/ALB3/YidC family. Type 1 subfamily. Interacts with the Sec translocase complex via SecD. Specifically interacts with transmembrane segments of nascent integral membrane proteins during membrane integration.

It localises to the cell inner membrane. In terms of biological role, required for the insertion and/or proper folding and/or complex formation of integral membrane proteins into the membrane. Involved in integration of membrane proteins that insert both dependently and independently of the Sec translocase complex, as well as at least some lipoproteins. Aids folding of multispanning membrane proteins. This Ectopseudomonas mendocina (strain ymp) (Pseudomonas mendocina) protein is Membrane protein insertase YidC.